We begin with the raw amino-acid sequence, 300 residues long: Bifunctional protein FolD (300 aa).

Residues 168–170 (GRS), Ser-193, and Ile-234 each bind NADP(+).

The protein belongs to the tetrahydrofolate dehydrogenase/cyclohydrolase family. Homodimer.

The catalysed reaction is (6R)-5,10-methylene-5,6,7,8-tetrahydrofolate + NADP(+) = (6R)-5,10-methenyltetrahydrofolate + NADPH. The enzyme catalyses (6R)-5,10-methenyltetrahydrofolate + H2O = (6R)-10-formyltetrahydrofolate + H(+). Its pathway is one-carbon metabolism; tetrahydrofolate interconversion. Functionally, catalyzes the oxidation of 5,10-methylenetetrahydrofolate to 5,10-methenyltetrahydrofolate and then the hydrolysis of 5,10-methenyltetrahydrofolate to 10-formyltetrahydrofolate. The sequence is that of Bifunctional protein FolD from Ehrlichia ruminantium (strain Gardel).